Here is a 99-residue protein sequence, read N- to C-terminus: DNA-directed RNA polymerase subunit omega (99 aa).

This sequence belongs to the RNA polymerase subunit omega family. In terms of assembly, the RNAP catalytic core consists of 2 alpha, 1 beta, 1 beta' and 1 omega subunit. When a sigma factor is associated with the core the holoenzyme is formed, which can initiate transcription.

The catalysed reaction is RNA(n) + a ribonucleoside 5'-triphosphate = RNA(n+1) + diphosphate. Its function is as follows. Promotes RNA polymerase assembly. Latches the N- and C-terminal regions of the beta' subunit thereby facilitating its interaction with the beta and alpha subunits. This is DNA-directed RNA polymerase subunit omega from Xylella fastidiosa (strain Temecula1 / ATCC 700964).